The sequence spans 523 residues: Sensory neuron membrane protein 1 (523 aa).

The Cytoplasmic segment spans residues 1–10; sequence MRLARGIKYA. A helical membrane pass occupies residues 11–31; that stretch reads VIGAGVALFGVLFGWVMFPAI. Residues 32-458 are Extracellular-facing; the sequence is LKSQLKKEMA…NQLFIPKRIV (427 aa). Residues Asn67 and Asn229 are each glycosylated (N-linked (GlcNAc...) asparagine). 3 disulfide bridges follow: Cys268/Cys333, Cys297/Cys352, and Cys335/Cys341. Asn440 carries an N-linked (GlcNAc...) asparagine glycan. A helical membrane pass occupies residues 459 to 479; it reads SVIRWWLLSFGMLAALGGVIF. Over 480–523 the chain is Cytoplasmic; the sequence is HFKDDIMRIAIKGDSSVTKVNPEDGEQKDVSVIGQSHEPPKINM. Positions 499-523 are disordered; it reads VNPEDGEQKDVSVIGQSHEPPKINM.

The protein belongs to the CD36 family. In terms of tissue distribution, localizes to both male and female antennae but not the leg, wing, gut, head, or thoracic ganglia. Detected throughout the sensory epithelium, associating with both sex-pheromone sensilla and plant-volatile sensilla. Differentially expressed both among different sensilla and different neurons within a given sensillum. Expression coincides with that of several other olfactory-specific proteins that are involved in odor detection.

The protein resides in the cell membrane. Plays an olfactory role that is not restricted to pheromone sensitivity. This Manduca sexta (Tobacco hawkmoth) protein is Sensory neuron membrane protein 1.